Consider the following 170-residue polypeptide: Ribosome maturation factor RimM (170 aa).

Residues 97 to 170 (KPDEYYWVDL…LVVVDWDPEF (74 aa)) enclose the PRC barrel domain.

It belongs to the RimM family. Binds ribosomal protein uS19.

The protein localises to the cytoplasm. Functionally, an accessory protein needed during the final step in the assembly of 30S ribosomal subunit, possibly for assembly of the head region. Essential for efficient processing of 16S rRNA. May be needed both before and after RbfA during the maturation of 16S rRNA. It has affinity for free ribosomal 30S subunits but not for 70S ribosomes. In Stenotrophomonas maltophilia (strain K279a), this protein is Ribosome maturation factor RimM.